We begin with the raw amino-acid sequence, 133 residues long: NADPH-dependent 7-cyano-7-deazaguanine reductase (133 aa).

Cys48 serves as the catalytic Thioimide intermediate. Catalysis depends on Asp55, which acts as the Proton donor. Substrate is bound by residues 70–72 (VEL) and 89–90 (QE).

Belongs to the GTP cyclohydrolase I family. QueF type 1 subfamily.

Its subcellular location is the cytoplasm. It carries out the reaction 7-aminomethyl-7-carbaguanine + 2 NADP(+) = 7-cyano-7-deazaguanine + 2 NADPH + 3 H(+). It participates in tRNA modification; tRNA-queuosine biosynthesis. Its function is as follows. Catalyzes the NADPH-dependent reduction of 7-cyano-7-deazaguanine (preQ0) to 7-aminomethyl-7-deazaguanine (preQ1). In Thermoanaerobacter pseudethanolicus (strain ATCC 33223 / 39E) (Clostridium thermohydrosulfuricum), this protein is NADPH-dependent 7-cyano-7-deazaguanine reductase.